Reading from the N-terminus, the 921-residue chain is Translation initiation factor IF-2 (921 aa).

Disordered stretches follow at residues 81–118 (AVAE…AAAP), 175–194 (PVVE…ANQA), and 219–301 (VAPA…KKHE). The segment covering 96 to 112 (PAAPTPPEVPAAAPAPP) has biased composition (pro residues). Positions 229 to 241 (RPSPAAGAPSRGA) are enriched in low complexity. The segment covering 292-301 (KKKEQPKKHE) has biased composition (basic and acidic residues). Positions 421 to 590 (KRPPVVTIMG…LLQADLMELK (170 aa)) constitute a tr-type G domain. The G1 stretch occupies residues 430 to 437 (GHVDHGKT). 430-437 (GHVDHGKT) contacts GTP. The tract at residues 455 to 459 (GITQH) is G2. The interval 476–479 (DTPG) is G3. Residues 476–480 (DTPGH) and 530–533 (NKID) contribute to the GTP site. The interval 530–533 (NKID) is G4. The tract at residues 566–568 (SAK) is G5.

The protein belongs to the TRAFAC class translation factor GTPase superfamily. Classic translation factor GTPase family. IF-2 subfamily.

The protein localises to the cytoplasm. Its function is as follows. One of the essential components for the initiation of protein synthesis. Protects formylmethionyl-tRNA from spontaneous hydrolysis and promotes its binding to the 30S ribosomal subunits. Also involved in the hydrolysis of GTP during the formation of the 70S ribosomal complex. The protein is Translation initiation factor IF-2 of Pelobacter propionicus (strain DSM 2379 / NBRC 103807 / OttBd1).